The chain runs to 125 residues: Cu-Zn superoxide dismutase-like protein (125 aa).

Cys52 and Cys102 form a disulfide bridge.

It belongs to the Cu-Zn superoxide dismutase family.

It localises to the host cytoplasm. Functionally, virion protein with no enzymatic activity. This chain is Cu-Zn superoxide dismutase-like protein, found in Camelpox virus (strain M-96).